A 485-amino-acid chain; its full sequence is MTAPLPGQEEIADPAIARDEMVSAFEDQNQNLRSNTSYYEAERRPEAIGVTVPVQMQSLLAHVGYPRLYVDSIAERQAVEGFRLGDADEADEELWQWWQANNLDIEAPLGYTDAYVHGRSYITISRPDPQIDLGWDPNVPLIRVEPPTRMYAEIDPRIGRPAKAIRVAYDAEGNEIQAATLYTPNETFGWFRAEGEWVEWFSDPHGLGAVPVVPLPNRTRLSDLYGTSEITPELRSMTDAAARILMLMQATAELMGVPQRLIFGIKPEEIGVDPETGQTLFDAYLARILAFEDAEGKIQQFSAAELANFTNALDQIAKQVAAYTGLPPQYLSTAADNPASAEAIRAAESRLIKKVERKNAIFGGAWEEAMRLAYRLMKGGDVPPDMLRMETVWRDPSTPTYAAKADAATKLYGNGQGVIPRERARKDMGYSIAEREEMRRWDEEEAAMGLGLLGTMVDADPTVPGSPNPTPAPKPQPAIEGGDSA.

The interval 456–485 is disordered; that stretch reads MVDADPTVPGSPNPTPAPKPQPAIEGGDSA. Pro residues predominate over residues 464 to 476; it reads PGSPNPTPAPKPQ.

The protein belongs to the SPP1-like portal protein family. In terms of assembly, homododecamer.

The protein localises to the virion. In terms of biological role, forms the portal vertex of the capsid. This portal plays critical roles in head assembly, genome packaging, neck/tail attachment, and genome ejection. The portal protein multimerizes as a single ring-shaped homododecamer arranged around a central channel. Binds to the terminase subunits to form the packaging machine. The chain is Portal protein (14) from Mycobacterium (Mycobacteriophage D29).